The primary structure comprises 20 residues: 2-oxo-acid reductase (20 aa).

Belongs to the AOR/FOR family. Forms various types of homooligomers. [4Fe-4S] cluster serves as cofactor. The cofactor is Mo-molybdopterin.

Its subcellular location is the cell membrane. It catalyses the reaction a (2R)-2-hydroxycarboxylate + A = a 2-oxocarboxylate + AH2. Its activity is regulated as follows. Is inhibited by cyanide. Is sensitive to oxygen. Its function is as follows. Oxidoreductase with an extremely broad substrate specificity that can reduce reversibly 2-oxocarboxylates to (2R)-hydroxycarboxylates. In Proteus hauseri, this protein is 2-oxo-acid reductase.